The following is an 84-amino-acid chain: Large ribosomal subunit protein bL27 (84 aa).

It belongs to the bacterial ribosomal protein bL27 family.

The protein is Large ribosomal subunit protein bL27 of Campylobacter jejuni subsp. jejuni serotype O:6 (strain 81116 / NCTC 11828).